The primary structure comprises 495 residues: Omega-crystallin (495 aa).

This sequence belongs to the aldehyde dehydrogenase family. In terms of tissue distribution, lens.

Functionally, omega-crystallins are structural components of squids and octopi eye lens. Contains relatively little if any DHAL activity. In Nototodarus sloanii (Wellington flying squid), this protein is Omega-crystallin.